The following is a 115-amino-acid chain: Large ribosomal subunit protein bL20 (115 aa).

The protein belongs to the bacterial ribosomal protein bL20 family.

Its function is as follows. Binds directly to 23S ribosomal RNA and is necessary for the in vitro assembly process of the 50S ribosomal subunit. It is not involved in the protein synthesizing functions of that subunit. In Borrelia garinii subsp. bavariensis (strain ATCC BAA-2496 / DSM 23469 / PBi) (Borreliella bavariensis), this protein is Large ribosomal subunit protein bL20.